A 424-amino-acid polypeptide reads, in one-letter code: Light-independent protochlorophyllide reductase subunit N (424 aa).

[4Fe-4S] cluster is bound by residues Cys16, Cys41, and Cys102.

The protein belongs to the BchN/ChlN family. As to quaternary structure, protochlorophyllide reductase is composed of three subunits; ChlL, ChlN and ChlB. Forms a heterotetramer of two ChlB and two ChlN subunits. [4Fe-4S] cluster serves as cofactor.

It carries out the reaction chlorophyllide a + oxidized 2[4Fe-4S]-[ferredoxin] + 2 ADP + 2 phosphate = protochlorophyllide a + reduced 2[4Fe-4S]-[ferredoxin] + 2 ATP + 2 H2O. It participates in porphyrin-containing compound metabolism; chlorophyll biosynthesis (light-independent). Functionally, component of the dark-operative protochlorophyllide reductase (DPOR) that uses Mg-ATP and reduced ferredoxin to reduce ring D of protochlorophyllide (Pchlide) to form chlorophyllide a (Chlide). This reaction is light-independent. The NB-protein (ChlN-ChlB) is the catalytic component of the complex. The chain is Light-independent protochlorophyllide reductase subunit N from Synechococcus sp. (strain WH7803).